A 937-amino-acid polypeptide reads, in one-letter code: Isoleucine--tRNA ligase (937 aa).

Residues 58–68 (PYANGSIHIGH) carry the 'HIGH' region motif. Glu561 contributes to the L-isoleucyl-5'-AMP binding site. The 'KMSKS' region motif lies at 602 to 606 (KMSKS). Lys605 serves as a coordination point for ATP. Residues Cys900, Cys903, Cys920, and Cys923 each coordinate Zn(2+).

The protein belongs to the class-I aminoacyl-tRNA synthetase family. IleS type 1 subfamily. In terms of assembly, monomer. Requires Zn(2+) as cofactor.

The protein resides in the cytoplasm. It catalyses the reaction tRNA(Ile) + L-isoleucine + ATP = L-isoleucyl-tRNA(Ile) + AMP + diphosphate. In terms of biological role, catalyzes the attachment of isoleucine to tRNA(Ile). As IleRS can inadvertently accommodate and process structurally similar amino acids such as valine, to avoid such errors it has two additional distinct tRNA(Ile)-dependent editing activities. One activity is designated as 'pretransfer' editing and involves the hydrolysis of activated Val-AMP. The other activity is designated 'posttransfer' editing and involves deacylation of mischarged Val-tRNA(Ile). The sequence is that of Isoleucine--tRNA ligase from Photorhabdus laumondii subsp. laumondii (strain DSM 15139 / CIP 105565 / TT01) (Photorhabdus luminescens subsp. laumondii).